We begin with the raw amino-acid sequence, 389 residues long: LL-diaminopimelate aminotransferase (389 aa).

Residues Tyr-13 and Gly-38 each coordinate substrate. Residues Tyr-67, 101 to 102 (SK), Tyr-126, Asn-176, Tyr-207, and 235 to 237 (SLS) each bind pyridoxal 5'-phosphate. The substrate site is built by Lys-102, Tyr-126, and Asn-176. Lys-238 carries the post-translational modification N6-(pyridoxal phosphate)lysine. Arg-246 lines the pyridoxal 5'-phosphate pocket. Arg-364 lines the substrate pocket.

Belongs to the class-I pyridoxal-phosphate-dependent aminotransferase family. LL-diaminopimelate aminotransferase subfamily. In terms of assembly, homodimer. The cofactor is pyridoxal 5'-phosphate.

The catalysed reaction is (2S,6S)-2,6-diaminopimelate + 2-oxoglutarate = (S)-2,3,4,5-tetrahydrodipicolinate + L-glutamate + H2O + H(+). It functions in the pathway amino-acid biosynthesis; L-lysine biosynthesis via DAP pathway; LL-2,6-diaminopimelate from (S)-tetrahydrodipicolinate (aminotransferase route): step 1/1. Involved in the synthesis of meso-diaminopimelate (m-DAP or DL-DAP), required for both lysine and peptidoglycan biosynthesis. Catalyzes the direct conversion of tetrahydrodipicolinate to LL-diaminopimelate. This chain is LL-diaminopimelate aminotransferase, found in Halothermothrix orenii (strain H 168 / OCM 544 / DSM 9562).